The sequence spans 342 residues: Holliday junction branch migration complex subunit RuvB (342 aa).

The segment at 1–184 (MDNERVITAV…FGIVQRLEFY (184 aa)) is large ATPase domain (RuvB-L). ATP is bound by residues I23, R24, G65, K68, T69, T70, 131–133 (EDY), R174, Y184, and R221. T69 is a Mg(2+) binding site. A small ATPAse domain (RuvB-S) region spans residues 185–255 (SVDDLSGIVS…IAQRALDMLE (71 aa)). The segment at 258–342 (SCGLDGTDRR…PRQDGDLFND (85 aa)) is head domain (RuvB-H). Positions 313 and 318 each coordinate DNA.

The protein belongs to the RuvB family. As to quaternary structure, homohexamer. Forms an RuvA(8)-RuvB(12)-Holliday junction (HJ) complex. HJ DNA is sandwiched between 2 RuvA tetramers; dsDNA enters through RuvA and exits via RuvB. An RuvB hexamer assembles on each DNA strand where it exits the tetramer. Each RuvB hexamer is contacted by two RuvA subunits (via domain III) on 2 adjacent RuvB subunits; this complex drives branch migration. In the full resolvosome a probable DNA-RuvA(4)-RuvB(12)-RuvC(2) complex forms which resolves the HJ.

It localises to the cytoplasm. It carries out the reaction ATP + H2O = ADP + phosphate + H(+). Functionally, the RuvA-RuvB-RuvC complex processes Holliday junction (HJ) DNA during genetic recombination and DNA repair, while the RuvA-RuvB complex plays an important role in the rescue of blocked DNA replication forks via replication fork reversal (RFR). RuvA specifically binds to HJ cruciform DNA, conferring on it an open structure. The RuvB hexamer acts as an ATP-dependent pump, pulling dsDNA into and through the RuvAB complex. RuvB forms 2 homohexamers on either side of HJ DNA bound by 1 or 2 RuvA tetramers; 4 subunits per hexamer contact DNA at a time. Coordinated motions by a converter formed by DNA-disengaged RuvB subunits stimulates ATP hydrolysis and nucleotide exchange. Immobilization of the converter enables RuvB to convert the ATP-contained energy into a lever motion, pulling 2 nucleotides of DNA out of the RuvA tetramer per ATP hydrolyzed, thus driving DNA branch migration. The RuvB motors rotate together with the DNA substrate, which together with the progressing nucleotide cycle form the mechanistic basis for DNA recombination by continuous HJ branch migration. Branch migration allows RuvC to scan DNA until it finds its consensus sequence, where it cleaves and resolves cruciform DNA. The protein is Holliday junction branch migration complex subunit RuvB of Alcanivorax borkumensis (strain ATCC 700651 / DSM 11573 / NCIMB 13689 / SK2).